Reading from the N-terminus, the 358-residue chain is Guanidino acid hydrolase, mitochondrial (358 aa).

The N-terminal 36 residues, 1-36 (MLRLLRSSWARGLGSGVATWRPSAGLFRPGCPGIRQ), are a transit peptide targeting the mitochondrion. The interval 31–56 (CPGIRQASGASDTPHHQSPSSESPVQ) is disordered. Residues 46–56 (HQSPSSESPVQ) show a composition bias toward low complexity. The Mn(2+) site is built by glutamine 168 and histidine 193. Lysine 199 bears the N6-acetyllysine mark. The residue at position 223 (lysine 223) is an N6-acetyllysine; alternate. At lysine 223 the chain carries N6-succinyllysine; alternate. A Mn(2+)-binding site is contributed by aspartate 284.

The protein belongs to the arginase family. Agmatinase subfamily. The cofactor is Mn(2+). In terms of tissue distribution, detected only in liver.

The protein resides in the mitochondrion. It carries out the reaction 3-guanidinopropanoate + H2O = urea + beta-alanine. It catalyses the reaction 4-guanidinobutanoate + H2O = urea + 4-aminobutanoate. The catalysed reaction is taurocyamine + H2O = urea + taurine. The enzyme catalyses L-arginine + H2O = urea + L-ornithine. It participates in nitrogen metabolism; urea cycle; L-ornithine and urea from L-arginine: step 1/1. In terms of biological role, hydrolyzes linear guanidino acids to form urea and the corresponding amines. Displays specificity for substrates having a negatively charged head group and short chains including taurocyamine, guanidino propanoic and butanoic acids. May protect cells by detoxifying potentially harmful amounts of guanidino acids. Metabolizes L-arginine with low efficiency. The protein is Guanidino acid hydrolase, mitochondrial (Agmat) of Mus musculus (Mouse).